Consider the following 613-residue polypeptide: Proton myo-inositol cotransporter hmit-1.2 (613 aa).

Topologically, residues 1–21 (MVAVEFKVSESGRPRPEKNPK) are cytoplasmic. The helical transmembrane segment at 22-42 (LGFFVYLLGSAAIIGGFLFGY) threads the bilayer. At 43–69 (DTSVVSAAMLYVPEAPGLKPMGTVWKE) the chain is on the extracellular side. Residues 70-90 (VIVSITPGMAAVGAWFSGAGS) traverse the membrane as a helical segment. Residues 91–96 (DRYGRK) lie on the Cytoplasmic side of the membrane. A helical membrane pass occupies residues 97 to 117 (PIIIGSTLIFVCGAVICAVAW). Over 118–119 (TK) the chain is Extracellular. A helical membrane pass occupies residues 120 to 140 (IVMLIGRIFLGVGIGFASMVV). At 141-157 (PVYLGEASPTHVRGTLV) the chain is on the cytoplasmic side. The helical transmembrane segment at 158 to 178 (SAFAMMISFGQVVANIMGGVF) threads the bilayer. Residues 179–189 (SYWEPYTIGWR) are Extracellular-facing. The helical transmembrane segment at 190–210 (LMFAFAGIPALIQFVCFIFLP) threads the bilayer. Topologically, residues 211 to 279 (ETPRWLYENG…RILKTPHVLK (69 aa)) are cytoplasmic. A helical membrane pass occupies residues 280–300 (ACFIGSMLQAFQQLAGINTIL). The Extracellular segment spans residues 301–317 (YYTADIIRSAGIENYHT). A helical membrane pass occupies residues 318–338 (IIWISVILSICNLIGPFAPMF). The Cytoplasmic portion of the chain corresponds to 339–347 (FIEKLGRRK). A helical membrane pass occupies residues 348-368 (LFLFSCAGVVVSLVLIGVSFL). The Extracellular segment spans residues 369–472 (LVGNDSAPNF…QKHHCTTSYT (104 aa)). Asn372, Asn451, and Asn456 each carry an N-linked (GlcNAc...) asparagine glycan. A helical transmembrane segment spans residues 473–493 (ILPIVMMGVYLLTFSCGFTSL). Topologically, residues 494 to 515 (PWVLNSEFYPMWARSTCVSIST) are cytoplasmic. A helical membrane pass occupies residues 516-536 (LSNWVFNLIIALTYLSLTHAI). At 537–539 (TKY) the chain is on the extracellular side. The helical transmembrane segment at 540–560 (GAFWLYAIFTIIAFIFIYFLV) threads the bilayer. Residues 561–613 (PETTGYSIDEVEMLFMNKRQRNIAMQARQAKLDAASDKDKNSSTSLSTETITM) lie on the Cytoplasmic side of the membrane. A disordered region spans residues 594 to 613 (AASDKDKNSSTSLSTETITM). Positions 602 to 613 (SSTSLSTETITM) are enriched in polar residues.

This sequence belongs to the major facilitator superfamily. Sugar transporter (TC 2.A.1.1) family. As to expression, expressed in the excretory canal cell and in pairs of amphid and sheath glia.

The protein resides in the cell membrane. It localises to the perikaryon. The enzyme catalyses myo-inositol(out) + H(+)(out) = myo-inositol(in) + H(+)(in). H(+)-myo-inositol cotransporter. Probably by promoting the transport of myo-inositol regulates intracellular osmosis in response to hyperosmotic stress. The chain is Proton myo-inositol cotransporter hmit-1.2 from Caenorhabditis elegans.